The chain runs to 513 residues: V-type proton ATPase subunit B (513 aa).

Arg375 provides a ligand contact to ATP. The segment covering 484–503 (ADRKGKGKDKPTTKDTRDTA) has biased composition (basic and acidic residues). The interval 484 to 513 (ADRKGKGKDKPTTKDTRDTAAPEEENLIDA) is disordered. The span at 504–513 (APEEENLIDA) shows a compositional bias: acidic residues.

Belongs to the ATPase alpha/beta chains family. V-ATPase is a heteromultimeric enzyme composed of a peripheral catalytic V1 complex (components A to H) attached to an integral membrane V0 proton pore complex (components: a, c, c', c'', d, e, f and VOA1).

The protein localises to the vacuole membrane. In terms of biological role, non-catalytic subunit of the V1 complex of vacuolar(H+)-ATPase (V-ATPase), a multisubunit enzyme composed of a peripheral complex (V1) that hydrolyzes ATP and a membrane integral complex (V0) that translocates protons. V-ATPase is responsible for acidifying and maintaining the pH of intracellular compartments. The sequence is that of V-type proton ATPase subunit B from Neurospora crassa (strain ATCC 24698 / 74-OR23-1A / CBS 708.71 / DSM 1257 / FGSC 987).